Here is a 110-residue protein sequence, read N- to C-terminus: Cytochrome c oxidase subunit 4B (110 aa).

3 consecutive transmembrane segments (helical) span residues 29-49 (MIAF…VGYE), 55-75 (FVVP…LYYF), and 89-109 (FIYG…TVVW).

It belongs to the cytochrome c oxidase bacterial subunit 4 family.

Its subcellular location is the cell membrane. It carries out the reaction 4 Fe(II)-[cytochrome c] + O2 + 8 H(+)(in) = 4 Fe(III)-[cytochrome c] + 2 H2O + 4 H(+)(out). The protein is Cytochrome c oxidase subunit 4B (caaD) of Bacillus sp. (strain PS3).